The following is a 96-amino-acid chain: Beta-defensin 20 (96 aa).

The first 21 residues, 1 to 21, serve as a signal peptide directing secretion; the sequence is MKLLQVLLVLLFVALADGAQP. 3 disulfide bridges follow: cysteine 24/cysteine 52, cysteine 32/cysteine 46, and cysteine 36/cysteine 53.

The protein belongs to the beta-defensin family.

Its subcellular location is the secreted. Functionally, has antibacterial activity. The sequence is that of Beta-defensin 20 (Defb20) from Mus musculus (Mouse).